We begin with the raw amino-acid sequence, 435 residues long: Hyaluronidase-1 (435 aa).

The signal sequence occupies residues 1–21; the sequence is MAAHLLPICALFLTLLDMAQG. Disulfide bonds link Cys43-Cys333 and Cys207-Cys221. N-linked (GlcNAc...) asparagine glycosylation is present at Asn99. The Proton donor role is filled by Glu131. 2 N-linked (GlcNAc...) asparagine glycosylation sites follow: Asn216 and Asn350. Positions 354 to 430 constitute an EGF-like domain; sequence GALLCSQALC…YPGWQAPWCE (77 aa). Cystine bridges form between Cys358–Cys369, Cys363–Cys418, and Cys420–Cys429.

The protein belongs to the glycosyl hydrolase 56 family. As to expression, highly expressed in the liver, kidney and heart. Weakly expressed in lung, placenta and skeletal muscle. No expression detected in adult brain. Isoform 1 is expressed only in bladder and prostate cancer cells, G2/G3 bladder tumor tissues and lymph node specimens showing tumor invasive tumors cells. Isoform 3, isoform 4, isoform 5 and isoform 6 are expressed in normal bladder and bladder tumor tissues.

It is found in the secreted. It localises to the lysosome. The enzyme catalyses Random hydrolysis of (1-&gt;4)-linkages between N-acetyl-beta-D-glucosamine and D-glucuronate residues in hyaluronate.. Functionally, may have a role in promoting tumor progression. May block the TGFB1-enhanced cell growth. The chain is Hyaluronidase-1 (HYAL1) from Homo sapiens (Human).